Consider the following 138-residue polypeptide: 6,7-dimethyl-8-ribityllumazine synthase (138 aa).

Residues phenylalanine 13, 45–47 (VFD), and 69–71 (AVI) each bind 5-amino-6-(D-ribitylamino)uracil. A (2S)-2-hydroxy-3-oxobutyl phosphate-binding site is contributed by 74–75 (AT). Catalysis depends on histidine 77, which acts as the Proton donor. Leucine 102 contributes to the 5-amino-6-(D-ribitylamino)uracil binding site. Arginine 117 contributes to the (2S)-2-hydroxy-3-oxobutyl phosphate binding site.

Belongs to the DMRL synthase family.

The enzyme catalyses (2S)-2-hydroxy-3-oxobutyl phosphate + 5-amino-6-(D-ribitylamino)uracil = 6,7-dimethyl-8-(1-D-ribityl)lumazine + phosphate + 2 H2O + H(+). Its pathway is cofactor biosynthesis; riboflavin biosynthesis; riboflavin from 2-hydroxy-3-oxobutyl phosphate and 5-amino-6-(D-ribitylamino)uracil: step 1/2. Catalyzes the formation of 6,7-dimethyl-8-ribityllumazine by condensation of 5-amino-6-(D-ribitylamino)uracil with 3,4-dihydroxy-2-butanone 4-phosphate. This is the penultimate step in the biosynthesis of riboflavin. The chain is 6,7-dimethyl-8-ribityllumazine synthase from Methanobrevibacter smithii (strain ATCC 35061 / DSM 861 / OCM 144 / PS).